An 81-amino-acid chain; its full sequence is Protein Vpu (81 aa).

Topologically, residues 1 to 7 are extracellular; the sequence is MQPLQIL. A helical transmembrane segment spans residues 8–28; it reads AIVALVVAAIIAIVVWTIVYI. Residues 29-81 are Cytoplasmic-facing; the sequence is EYRKILRQRKIDRLIDRITERAEDSGNESEGDQEELSALVERGHLAPWDVDDL. The tract at residues 50-81 is disordered; the sequence is AEDSGNESEGDQEELSALVERGHLAPWDVDDL. 2 positions are modified to phosphoserine; by host CK2: Ser-53 and Ser-57. A compositionally biased stretch (acidic residues) spans 53-63; it reads SGNESEGDQEE.

This sequence belongs to the HIV-1 VPU protein family. Homopentamer. Interacts with host CD4 and BRTC; these interactions induce proteasomal degradation of CD4. Interacts with host BST2; this interaction leads to the degradation of host BST2. Interacts with host FBXW11. Interacts with host AP1M1; this interaction plays a role in the mistrafficking and subsequent degradation of host BST2. Interacts with host RANBP2; this interaction allows Vpu to down-regulate host BLM sumoylation. Post-translationally, phosphorylated by host CK2. This phosphorylation is necessary for interaction with human BTRC and degradation of CD4.

The protein resides in the host membrane. Its activity is regulated as follows. Ion channel activity is inhibited by hexamethylene amiloride in vitro. Its function is as follows. Enhances virion budding by targeting host CD4 and Tetherin/BST2 to proteasome degradation. Degradation of CD4 prevents any unwanted premature interactions between viral Env and its host receptor CD4 in the endoplasmic reticulum. Degradation of antiretroviral protein Tetherin/BST2 is important for virion budding, as BST2 tethers new viral particles to the host cell membrane. Mechanistically, Vpu bridges either CD4 or BST2 to BTRC, a substrate recognition subunit of the Skp1/Cullin/F-box protein E3 ubiquitin ligase, induces their ubiquitination and subsequent proteasomal degradation. The alteration of the E3 ligase specificity by Vpu seems to promote the degradation of host IKBKB, leading to NF-kappa-B down-regulation and subsequent apoptosis. Acts as a viroporin that forms an oligomeric ion channel in membranes. Modulates the host DNA repair mechanisms to promote degradation of nuclear viral cDNA in cells that are already productively infected in order to suppress immune sensing and proviral hyper-integration (superinfection). Manipulates PML-NBs and modulates SUMOylation of host BLM protein thereby enhancing its DNA-end processing activity toward viral unintegrated linear DNA. Also inhibits RAD52-mediated homologous repair of viral cDNA, preventing the generation of dead-end circular forms of single copies of the long terminal repeat and permitting sustained nucleolytic attack. The sequence is that of Protein Vpu from Human immunodeficiency virus type 1 group M subtype B (isolate SF162) (HIV-1).